A 149-amino-acid polypeptide reads, in one-letter code: Heavy metal-associated isoprenylated plant protein 21 (149 aa).

Residues 25-88 (LQTVDIKVKM…RVKSTGKKAE (64 aa)) enclose the HMA domain. Cysteine 36 and cysteine 39 together coordinate a metal cation. Cysteine 146 carries the post-translational modification Cysteine methyl ester. A lipid anchor (S-farnesyl cysteine) is attached at cysteine 146. Positions 147-149 (SIM) are cleaved as a propeptide — removed in mature form.

Belongs to the HIPP family. Interacts with ZHD11/HB29. As to expression, expressed at low levels in leaves and sepals.

Its subcellular location is the membrane. Heavy-metal-binding protein. Binds cadmium. May be involved in cadmium transport and play a role in cadmium detoxification. This is Heavy metal-associated isoprenylated plant protein 21 from Arabidopsis thaliana (Mouse-ear cress).